The sequence spans 269 residues: Formamidopyrimidine-DNA glycosylase (269 aa).

Residue proline 2 is the Schiff-base intermediate with DNA of the active site. Residue glutamate 3 is the Proton donor of the active site. Lysine 57 serves as the catalytic Proton donor; for beta-elimination activity. 3 residues coordinate DNA: histidine 90, arginine 109, and lysine 150. The FPG-type zinc finger occupies 235–269 (QVYGRAGEPCRQCGHPIEIAKHGQRSTFFCRHCQH). Arginine 259 acts as the Proton donor; for delta-elimination activity in catalysis.

The protein belongs to the FPG family. Monomer. The cofactor is Zn(2+).

It catalyses the reaction Hydrolysis of DNA containing ring-opened 7-methylguanine residues, releasing 2,6-diamino-4-hydroxy-5-(N-methyl)formamidopyrimidine.. The catalysed reaction is 2'-deoxyribonucleotide-(2'-deoxyribose 5'-phosphate)-2'-deoxyribonucleotide-DNA = a 3'-end 2'-deoxyribonucleotide-(2,3-dehydro-2,3-deoxyribose 5'-phosphate)-DNA + a 5'-end 5'-phospho-2'-deoxyribonucleoside-DNA + H(+). In terms of biological role, involved in base excision repair of DNA damaged by oxidation or by mutagenic agents. Acts as a DNA glycosylase that recognizes and removes damaged bases. Has a preference for oxidized purines, such as 7,8-dihydro-8-oxoguanine (8-oxoG). Has AP (apurinic/apyrimidinic) lyase activity and introduces nicks in the DNA strand. Cleaves the DNA backbone by beta-delta elimination to generate a single-strand break at the site of the removed base with both 3'- and 5'-phosphates. The polypeptide is Formamidopyrimidine-DNA glycosylase (Yersinia pseudotuberculosis serotype O:1b (strain IP 31758)).